A 299-amino-acid polypeptide reads, in one-letter code: Class II hydrophobin C (299 aa).

The N-terminal stretch at 1 to 17 is a signal peptide; the sequence is MKFLTVAAAIFASTSLA. 3 N-linked (GlcNAc...) asparagine glycosylation sites follow: N39, N78, and N91. Disulfide bonds link C232-C281, C242-C272, C243-C255, and C282-C293.

Belongs to the cerato-ulmin hydrophobin family.

The protein resides in the secreted. Its subcellular location is the cell wall. It localises to the vacuole. The protein localises to the cytoplasmic vesicle. Functionally, aerial growth, conidiation, and dispersal of filamentous fungi in the environment rely upon a capability of their secreting small amphipathic proteins called hydrophobins (HPBs) with low sequence identity. Class I can self-assemble into an outermost layer of rodlet bundles on aerial cell surfaces, conferring cellular hydrophobicity that supports fungal growth, development and dispersal; whereas Class II form highly ordered films at water-air interfaces through intermolecular interactions but contribute nothing to the rodlet structure. Hyd2C contributes to certain cell wall-related features, such as hydrophobicity but is not involved in cell wall-related events during fungal proliferation in host hemocoel. Does not contribute to conidial hydrophobicity. Involved actively in the asexual development. The chain is Class II hydrophobin C from Beauveria bassiana (strain ARSEF 2860) (White muscardine disease fungus).